A 547-amino-acid chain; its full sequence is Chaperonin GroEL (547 aa).

ATP is bound by residues 30 to 33 (TLGP), lysine 51, 87 to 91 (DGTTT), glycine 415, and aspartate 496. The disordered stretch occupies residues 527–547 (SDKAEPMPMRGGMGGMGGMDF). A compositionally biased stretch (gly residues) spans 537–547 (GGMGGMGGMDF).

It belongs to the chaperonin (HSP60) family. In terms of assembly, forms a cylinder of 14 subunits composed of two heptameric rings stacked back-to-back. Interacts with the co-chaperonin GroES.

The protein localises to the cytoplasm. It catalyses the reaction ATP + H2O + a folded polypeptide = ADP + phosphate + an unfolded polypeptide.. Together with its co-chaperonin GroES, plays an essential role in assisting protein folding. The GroEL-GroES system forms a nano-cage that allows encapsulation of the non-native substrate proteins and provides a physical environment optimized to promote and accelerate protein folding. The sequence is that of Chaperonin GroEL from Rickettsia rickettsii (strain Sheila Smith).